A 338-amino-acid polypeptide reads, in one-letter code: Aspartate-semialdehyde dehydrogenase (338 aa).

NADP(+) is bound by residues 13–16 (SGAV) and 41–42 (RS). A phosphate-binding site is contributed by arginine 101. Cysteine 132 serves as the catalytic Acyl-thioester intermediate. Glutamine 159 serves as a coordination point for substrate. 162-163 (SG) provides a ligand contact to NADP(+). Residue lysine 216 participates in phosphate binding. Arginine 238 provides a ligand contact to substrate. The active-site Proton acceptor is histidine 245. Asparagine 317 contacts NADP(+).

Belongs to the aspartate-semialdehyde dehydrogenase family. Homodimer.

The enzyme catalyses L-aspartate 4-semialdehyde + phosphate + NADP(+) = 4-phospho-L-aspartate + NADPH + H(+). It participates in amino-acid biosynthesis; L-lysine biosynthesis via DAP pathway; (S)-tetrahydrodipicolinate from L-aspartate: step 2/4. It functions in the pathway amino-acid biosynthesis; L-methionine biosynthesis via de novo pathway; L-homoserine from L-aspartate: step 2/3. The protein operates within amino-acid biosynthesis; L-threonine biosynthesis; L-threonine from L-aspartate: step 2/5. Catalyzes the NADPH-dependent formation of L-aspartate-semialdehyde (L-ASA) by the reductive dephosphorylation of L-aspartyl-4-phosphate. In Shewanella violacea (strain JCM 10179 / CIP 106290 / LMG 19151 / DSS12), this protein is Aspartate-semialdehyde dehydrogenase.